We begin with the raw amino-acid sequence, 415 residues long: Gamma-glutamyl phosphate reductase (415 aa).

Belongs to the gamma-glutamyl phosphate reductase family.

It is found in the cytoplasm. The catalysed reaction is L-glutamate 5-semialdehyde + phosphate + NADP(+) = L-glutamyl 5-phosphate + NADPH + H(+). It participates in amino-acid biosynthesis; L-proline biosynthesis; L-glutamate 5-semialdehyde from L-glutamate: step 2/2. Functionally, catalyzes the NADPH-dependent reduction of L-glutamate 5-phosphate into L-glutamate 5-semialdehyde and phosphate. The product spontaneously undergoes cyclization to form 1-pyrroline-5-carboxylate. The polypeptide is Gamma-glutamyl phosphate reductase (Cutibacterium acnes (strain DSM 16379 / KPA171202) (Propionibacterium acnes)).